We begin with the raw amino-acid sequence, 557 residues long: Dihydroxy-acid dehydratase (557 aa).

Asp78 contacts Mg(2+). Cys119 contacts [2Fe-2S] cluster. Mg(2+) contacts are provided by Asp120 and Lys121. The residue at position 121 (Lys121) is an N6-carboxylysine. Cys191 is a [2Fe-2S] cluster binding site. Glu442 is a Mg(2+) binding site. The Proton acceptor role is filled by Ser468.

It belongs to the IlvD/Edd family. Homodimer. [2Fe-2S] cluster is required as a cofactor. The cofactor is Mg(2+).

The enzyme catalyses (2R)-2,3-dihydroxy-3-methylbutanoate = 3-methyl-2-oxobutanoate + H2O. It carries out the reaction (2R,3R)-2,3-dihydroxy-3-methylpentanoate = (S)-3-methyl-2-oxopentanoate + H2O. It functions in the pathway amino-acid biosynthesis; L-isoleucine biosynthesis; L-isoleucine from 2-oxobutanoate: step 3/4. It participates in amino-acid biosynthesis; L-valine biosynthesis; L-valine from pyruvate: step 3/4. In terms of biological role, functions in the biosynthesis of branched-chain amino acids. Catalyzes the dehydration of (2R,3R)-2,3-dihydroxy-3-methylpentanoate (2,3-dihydroxy-3-methylvalerate) into 2-oxo-3-methylpentanoate (2-oxo-3-methylvalerate) and of (2R)-2,3-dihydroxy-3-methylbutanoate (2,3-dihydroxyisovalerate) into 2-oxo-3-methylbutanoate (2-oxoisovalerate), the penultimate precursor to L-isoleucine and L-valine, respectively. This Syntrophobacter fumaroxidans (strain DSM 10017 / MPOB) protein is Dihydroxy-acid dehydratase.